The sequence spans 259 residues: Ribosomal RNA small subunit methyltransferase A (259 aa).

Residues Asn13, Leu15, Gly39, Glu60, Asp84, and Asn101 each contribute to the S-adenosyl-L-methionine site.

This sequence belongs to the class I-like SAM-binding methyltransferase superfamily. rRNA adenine N(6)-methyltransferase family. RsmA subfamily.

It localises to the cytoplasm. The enzyme catalyses adenosine(1518)/adenosine(1519) in 16S rRNA + 4 S-adenosyl-L-methionine = N(6)-dimethyladenosine(1518)/N(6)-dimethyladenosine(1519) in 16S rRNA + 4 S-adenosyl-L-homocysteine + 4 H(+). In terms of biological role, specifically dimethylates two adjacent adenosines (A1518 and A1519) in the loop of a conserved hairpin near the 3'-end of 16S rRNA in the 30S particle. May play a critical role in biogenesis of 30S subunits. The chain is Ribosomal RNA small subunit methyltransferase A from Mesomycoplasma hyopneumoniae (strain 232) (Mycoplasma hyopneumoniae).